A 172-amino-acid chain; its full sequence is Large ribosomal subunit protein bL17 (172 aa).

The segment covering Leu-140–Pro-160 has biased composition (basic and acidic residues). The interval Leu-140–Asn-172 is disordered.

It belongs to the bacterial ribosomal protein bL17 family. Part of the 50S ribosomal subunit. Contacts protein L32.

The protein is Large ribosomal subunit protein bL17 of Leptospira biflexa serovar Patoc (strain Patoc 1 / Ames).